Consider the following 312-residue polypeptide: Glyoxylate/hydroxypyruvate reductase A (312 aa).

Arg227 is an active-site residue. The Proton donor role is filled by His275.

The protein belongs to the D-isomer specific 2-hydroxyacid dehydrogenase family. GhrA subfamily.

Its subcellular location is the cytoplasm. It carries out the reaction glycolate + NADP(+) = glyoxylate + NADPH + H(+). The catalysed reaction is (R)-glycerate + NAD(+) = 3-hydroxypyruvate + NADH + H(+). The enzyme catalyses (R)-glycerate + NADP(+) = 3-hydroxypyruvate + NADPH + H(+). Functionally, catalyzes the NADPH-dependent reduction of glyoxylate and hydroxypyruvate into glycolate and glycerate, respectively. In Salmonella heidelberg (strain SL476), this protein is Glyoxylate/hydroxypyruvate reductase A.